We begin with the raw amino-acid sequence, 553 residues long: Putative transport protein YidE (553 aa).

The next 5 helical transmembrane spans lie at I4–V24, G28–S48, F65–S85, L95–F115, and M158–L178. 2 consecutive RCK C-terminal domains span residues Q191–Q276 and D279–N361. Transmembrane regions (helical) follow at residues M371–V391, G393–L413, I439–V459, L464–L484, Y493–A513, and L533–G553.

This sequence belongs to the AAE transporter (TC 2.A.81) family. YidE subfamily.

It localises to the cell membrane. The chain is Putative transport protein YidE from Escherichia coli O6:H1 (strain CFT073 / ATCC 700928 / UPEC).